A 627-amino-acid polypeptide reads, in one-letter code: Translation factor GUF1, mitochondrial (627 aa).

The transit peptide at 1–16 (MSLAWSAGRAWSRQSY) directs the protein to the mitochondrion. The region spanning 40-221 (ERYRNFCIVA…AVIERIPHPV (182 aa)) is the tr-type G domain. GTP is bound by residues 49 to 56 (AHIDHGKS), 114 to 118 (DTPGH), and 168 to 171 (NKID).

Belongs to the TRAFAC class translation factor GTPase superfamily. Classic translation factor GTPase family. LepA subfamily.

The protein resides in the mitochondrion inner membrane. It catalyses the reaction GTP + H2O = GDP + phosphate + H(+). Functionally, promotes mitochondrial protein synthesis. May act as a fidelity factor of the translation reaction, by catalyzing a one-codon backward translocation of tRNAs on improperly translocated ribosomes. Binds to mitochondrial ribosomes in a GTP-dependent manner. In Fusarium vanettenii (strain ATCC MYA-4622 / CBS 123669 / FGSC 9596 / NRRL 45880 / 77-13-4) (Fusarium solani subsp. pisi), this protein is Translation factor GUF1, mitochondrial.